Reading from the N-terminus, the 330-residue chain is Ferredoxin--NADP reductase (330 aa).

Residues E35, Q43, Y48, V90, F123, D285, and T326 each coordinate FAD.

Belongs to the ferredoxin--NADP reductase type 2 family. Homodimer. It depends on FAD as a cofactor.

The enzyme catalyses 2 reduced [2Fe-2S]-[ferredoxin] + NADP(+) + H(+) = 2 oxidized [2Fe-2S]-[ferredoxin] + NADPH. The polypeptide is Ferredoxin--NADP reductase (Streptococcus equi subsp. zooepidemicus (strain MGCS10565)).